A 401-amino-acid chain; its full sequence is Adaptive-response sensory kinase SasA (401 aa).

The region spanning 175–400 is the Histidine kinase domain; that stretch reads MLVHDLRNPL…WFHFTLPVYP (226 aa). His-178 carries the phosphohistidine; by autocatalysis modification.

Homooligomerizes. Interacts with KaiC. Participates in the KaiABC clock complex, whose core is composed of a KaiC homohexamer, 6 KaiB and up to 6 KaiA dimers. SasA and KaiB(fs) compete to bind to KaiC.

It carries out the reaction ATP + protein L-histidine = ADP + protein N-phospho-L-histidine.. Functionally, member of the two-component regulatory system SasA/RpaA involved in genome-wide circadian gene expression. One of several clock output pathways. Participates in the Kai clock protein complex, the main circadian regulator in cyanobacteria, via its interaction with KaiC. KaiC enhances the autophosphorylation activity of SasA, which then transfers its phosphate group to RpaA to activate it. In addition to its output function, recruits fold-shifted KaiB (KaiB(fs)) to KaiC to cooperatively form the KaiB(6):KaiC(6) complex (independent of SasA kinase activity). Required for robustness of the circadian rhythm of gene expression and is involved in clock output, also required for adaptation to light/dark cycles. The chain is Adaptive-response sensory kinase SasA from Nostoc sp. (strain PCC 7120 / SAG 25.82 / UTEX 2576).